Here is a 241-residue protein sequence, read N- to C-terminus: Biosynthetic peptidoglycan transglycosylase (241 aa).

Residues 18–38 (GVIGIIALWMAGILIFAFLPV) traverse the membrane as a helical segment.

Belongs to the glycosyltransferase 51 family.

It localises to the cell inner membrane. The enzyme catalyses [GlcNAc-(1-&gt;4)-Mur2Ac(oyl-L-Ala-gamma-D-Glu-L-Lys-D-Ala-D-Ala)](n)-di-trans,octa-cis-undecaprenyl diphosphate + beta-D-GlcNAc-(1-&gt;4)-Mur2Ac(oyl-L-Ala-gamma-D-Glu-L-Lys-D-Ala-D-Ala)-di-trans,octa-cis-undecaprenyl diphosphate = [GlcNAc-(1-&gt;4)-Mur2Ac(oyl-L-Ala-gamma-D-Glu-L-Lys-D-Ala-D-Ala)](n+1)-di-trans,octa-cis-undecaprenyl diphosphate + di-trans,octa-cis-undecaprenyl diphosphate + H(+). The protein operates within cell wall biogenesis; peptidoglycan biosynthesis. Functionally, peptidoglycan polymerase that catalyzes glycan chain elongation from lipid-linked precursors. The sequence is that of Biosynthetic peptidoglycan transglycosylase from Yersinia pseudotuberculosis serotype O:3 (strain YPIII).